The primary structure comprises 500 residues: Galactofuranose transporter ATP-binding protein YtfR (500 aa).

2 ABC transporter domains span residues 10-245 and 259-497; these read LRTE…LGRE and LSDK…IMNA. 42–49 is an ATP binding site; it reads GENGAGKS.

It belongs to the ABC transporter superfamily. The complex is composed of two ATP-binding proteins (YtfR), two transmembrane proteins (YtfT and YjfF) and a solute-binding protein (YtfQ).

Its subcellular location is the cell inner membrane. It carries out the reaction D-galactofuranose(out) + ATP + H2O = D-galactofuranose(in) + ADP + phosphate + H(+). Functionally, part of the ABC transporter complex YtfQRT-YjfF involved in galactofuranose transport. Responsible for energy coupling to the transport system. The protein is Galactofuranose transporter ATP-binding protein YtfR (ytfR) of Escherichia coli (strain K12).